We begin with the raw amino-acid sequence, 90 residues long: UPF0297 protein BH1268 (90 aa).

This sequence belongs to the UPF0297 family.

This chain is UPF0297 protein BH1268, found in Halalkalibacterium halodurans (strain ATCC BAA-125 / DSM 18197 / FERM 7344 / JCM 9153 / C-125) (Bacillus halodurans).